The following is a 300-amino-acid chain: 17-beta-hydroxysteroid dehydrogenase 13 (300 aa).

The signal sequence occupies residues 1-19 (MNIILEILLLLITIIYSYL). At Ser-33 the chain carries Phosphoserine. An NAD(+)-binding site is contributed by 40–67 (LITGAGHGIGRQTTYEFAKRQSILVLWD). Position 172 (Ser-172) interacts with substrate. Catalysis depends on Tyr-185, which acts as the Proton acceptor. Residue Lys-189 participates in NAD(+) binding.

This sequence belongs to the short-chain dehydrogenases/reductases (SDR) family. As to expression, highly expressed in the liver. Also detected in ovary, bone marrow, kidney, brain, lung, skeletal muscle, bladder and testis.

The protein localises to the lipid droplet. It localises to the endoplasmic reticulum. The protein resides in the cytoplasm. The enzyme catalyses 17beta-estradiol + NAD(+) = estrone + NADH + H(+). It catalyses the reaction all-trans-retinol + NAD(+) = all-trans-retinal + NADH + H(+). The catalysed reaction is all-trans-retinal + NAD(+) + H2O = all-trans-retinoate + NADH + 2 H(+). Plays a pivotal role in hepatic lipid metabolism. In vitro, it catalyzes the oxidation of a variety of lipid substrates, including 17beta-estradiol, retinol, retinal, and leukotriene B4. In terms of biological role, has retinol/retinal dehydrogenase activity in vitro. Its function is as follows. Does not have retinol/retinal dehydrogenase activity in vitro. This chain is 17-beta-hydroxysteroid dehydrogenase 13, found in Homo sapiens (Human).